We begin with the raw amino-acid sequence, 483 residues long: tRNA sulfurtransferase (483 aa).

A THUMP domain is found at 62–166 (PEICDALTRI…QDKLILVKAR (105 aa)). ATP is bound by residues 184 to 185 (LI), lysine 266, glycine 288, and glutamine 297. Cysteines 345 and 457 form a disulfide. The Rhodanese domain maps to 405–483 (LADTDVLLDI…GYTNVKVYRP (79 aa)). Residue cysteine 457 is the Cysteine persulfide intermediate of the active site.

It belongs to the ThiI family.

It is found in the cytoplasm. The enzyme catalyses [ThiI sulfur-carrier protein]-S-sulfanyl-L-cysteine + a uridine in tRNA + 2 reduced [2Fe-2S]-[ferredoxin] + ATP + H(+) = [ThiI sulfur-carrier protein]-L-cysteine + a 4-thiouridine in tRNA + 2 oxidized [2Fe-2S]-[ferredoxin] + AMP + diphosphate. The catalysed reaction is [ThiS sulfur-carrier protein]-C-terminal Gly-Gly-AMP + S-sulfanyl-L-cysteinyl-[cysteine desulfurase] + AH2 = [ThiS sulfur-carrier protein]-C-terminal-Gly-aminoethanethioate + L-cysteinyl-[cysteine desulfurase] + A + AMP + 2 H(+). Its pathway is cofactor biosynthesis; thiamine diphosphate biosynthesis. In terms of biological role, catalyzes the ATP-dependent transfer of a sulfur to tRNA to produce 4-thiouridine in position 8 of tRNAs, which functions as a near-UV photosensor. Also catalyzes the transfer of sulfur to the sulfur carrier protein ThiS, forming ThiS-thiocarboxylate. This is a step in the synthesis of thiazole, in the thiamine biosynthesis pathway. The sulfur is donated as persulfide by IscS. The protein is tRNA sulfurtransferase of Yersinia pseudotuberculosis serotype IB (strain PB1/+).